We begin with the raw amino-acid sequence, 222 residues long: Protein CicA (222 aa).

This chain is Protein CicA (cicA), found in Caulobacter vibrioides (strain ATCC 19089 / CIP 103742 / CB 15) (Caulobacter crescentus).